Reading from the N-terminus, the 608-residue chain is Prolactin receptor (608 aa).

An N-terminal signal peptide occupies residues 1–19; that stretch reads MSSALAYMLLVLSISLLNG. Residues 20–229 lie on the Extracellular side of the membrane; it reads QSPPGKPEIH…EIPNDFTLKD (210 aa). Fibronectin type-III domains lie at 22–122 and 124–224; these read PPGK…IVEP and PPRN…IPND. Residues C31 and C41 are joined by a disulfide bond. N54 carries N-linked (GlcNAc...) asparagine glycosylation. A disulfide bridge links C70 with C81. N99 and N127 each carry an N-linked (GlcNAc...) asparagine glycan. D206 and H207 together coordinate Zn(2+). The short motif at 210-214 is the WSXWS motif element; that stretch reads WSRWG. A helical transmembrane segment spans residues 230–253; it reads TTVWIIVAVLSAVICLIMVWAVAL. Residues 254 to 608 lie on the Cytoplasmic side of the membrane; it reads KGYSMMTCIF…DPTCFMHSFH (355 aa). A Box 1 motif motif is present at residues 262–270; that stretch reads IFPPVPGPK. Disordered stretches follow at residues 317–355, 377–419, and 466–487; these read DERLMPSHSKEYPGQGVKPTHLDPDSDSGHGSYDSHSLL, KPEN…TRRS, and GAKSFPSDKQNTSWPPLQEKGP. Positions 318–327 are enriched in basic and acidic residues; sequence ERLMPSHSKE. Residues 345–354 are compositionally biased toward low complexity; sequence GHGSYDSHSL. Over residues 398-408 the composition is skewed to polar residues; the sequence is CHTDTSKSTTW.

This sequence belongs to the type I cytokine receptor family. Type 1 subfamily. Interacts with SMARCA1. Interacts with NEK3 and VAV2 and this interaction is prolactin-dependent.

The protein localises to the membrane. Its function is as follows. This is a receptor for the anterior pituitary hormone prolactin. The protein is Prolactin receptor (Prlr) of Mus musculus (Mouse).